Reading from the N-terminus, the 164-residue chain is Probable ubiquitin-conjugating enzyme E2 7 (164 aa).

Positions 3-163 (QSSLLLKKQL…VAQCVRRSQE (161 aa)) constitute a UBC core domain. The Glycyl thioester intermediate role is filled by C88.

Belongs to the ubiquitin-conjugating enzyme family.

It carries out the reaction S-ubiquitinyl-[E1 ubiquitin-activating enzyme]-L-cysteine + [E2 ubiquitin-conjugating enzyme]-L-cysteine = [E1 ubiquitin-activating enzyme]-L-cysteine + S-ubiquitinyl-[E2 ubiquitin-conjugating enzyme]-L-cysteine.. It functions in the pathway protein modification; protein ubiquitination. Its function is as follows. Catalyzes the covalent attachment of ubiquitin to other proteins. This chain is Probable ubiquitin-conjugating enzyme E2 7 (ubc-7), found in Caenorhabditis elegans.